Reading from the N-terminus, the 171-residue chain is Ribulose bisphosphate carboxylase small subunit, chloroplastic (171 aa).

A chloroplast-targeting transit peptide spans Met-1–Arg-50.

Belongs to the RuBisCO small chain family. In terms of assembly, heterohexadecamer of 8 large and 8 small subunits.

Its subcellular location is the plastid. The protein resides in the chloroplast. RuBisCO catalyzes two reactions: the carboxylation of D-ribulose 1,5-bisphosphate, the primary event in carbon dioxide fixation, as well as the oxidative fragmentation of the pentose substrate. Both reactions occur simultaneously and in competition at the same active site. Although the small subunit is not catalytic it is essential for maximal activity. The protein is Ribulose bisphosphate carboxylase small subunit, chloroplastic of Pinus thunbergii (Japanese black pine).